The sequence spans 446 residues: tRNA-2-methylthio-N(6)-dimethylallyladenosine synthase (446 aa).

In terms of domain architecture, MTTase N-terminal spans 3 to 120; it reads KKLFIETHGC…LPEMIDAARS (118 aa). [4Fe-4S] cluster-binding residues include Cys12, Cys49, Cys83, Cys157, Cys161, and Cys164. Residues 143–375 form the Radical SAM core domain; it reads RVDGPTAFVS…QGRIHQQGYE (233 aa). The TRAM domain maps to 378 to 442; the sequence is RRMVGSTQRI…PHSLRGTLIE (65 aa).

It belongs to the methylthiotransferase family. MiaB subfamily. As to quaternary structure, monomer. The cofactor is [4Fe-4S] cluster.

Its subcellular location is the cytoplasm. It carries out the reaction N(6)-dimethylallyladenosine(37) in tRNA + (sulfur carrier)-SH + AH2 + 2 S-adenosyl-L-methionine = 2-methylsulfanyl-N(6)-dimethylallyladenosine(37) in tRNA + (sulfur carrier)-H + 5'-deoxyadenosine + L-methionine + A + S-adenosyl-L-homocysteine + 2 H(+). Functionally, catalyzes the methylthiolation of N6-(dimethylallyl)adenosine (i(6)A), leading to the formation of 2-methylthio-N6-(dimethylallyl)adenosine (ms(2)i(6)A) at position 37 in tRNAs that read codons beginning with uridine. This Pseudomonas paraeruginosa (strain DSM 24068 / PA7) (Pseudomonas aeruginosa (strain PA7)) protein is tRNA-2-methylthio-N(6)-dimethylallyladenosine synthase.